The following is a 391-amino-acid chain: MGAVPGVVLLLMLAVLGIRAAPAPEECHKLTKPVTKADVQSVSGDWVLVWSVANTTERWICENLTSSYVEFKLHSDIIEYTERNLFLGNSCISFYSNLSASTEKQQQFSLNNLQMEEKGVVRPFNDNGTVKFFETCVDCLSMEYSGDIGRFLLIYRRDGVHQNVEVLKAAQDESQKLAECLGFSIDEPFIYDGVSDFCHKKSPEECHKLTKPVTKADVQSVSGDWVLVWSIDENSTISDDWKKLKTSYVEQRVDSGVIRFTERNMLKNNSCMTFKTNMTAGPESQNTFIYTSGKMEENGVVTVLDENGTVKFFETCADCLSMEYSGFFGHFLLIYRRDGVHQNVEVLKAAQDESQKLAECLGFSIDEPFIYDGVSDFCHKKSSPEVKPEQD.

The N-terminal stretch at Met-1–Ala-20 is a signal peptide. 2 repeat units span residues Pro-24–Ser-202 and Pro-203–Asp-391. N-linked (GlcNAc...) asparagine glycans are attached at residues Asn-54, Asn-63, Asn-97, Asn-234, Asn-268, Asn-277, and Asn-307.

In terms of assembly, homodimer or heterodimer of PSTBP1 and PSTBP2. In terms of processing, glycosylated.

It localises to the secreted. Binds both saxitoxin and tetradotoxin. May play a role in toxin accumulation and/or excretion. The polypeptide is Saxitoxin and tetrodotoxin-binding protein 1 (psbp1) (Takifugu pardalis (Panther puffer)).